The primary structure comprises 112 residues: Phosphoribosyl-AMP cyclohydrolase (112 aa).

D76 is a Mg(2+) binding site. C77 serves as a coordination point for Zn(2+). Mg(2+) is bound by residues D78 and D80. Zn(2+) contacts are provided by C93 and C100.

It belongs to the PRA-CH family. In terms of assembly, homodimer. The cofactor is Mg(2+). It depends on Zn(2+) as a cofactor.

The protein localises to the cytoplasm. It carries out the reaction 1-(5-phospho-beta-D-ribosyl)-5'-AMP + H2O = 1-(5-phospho-beta-D-ribosyl)-5-[(5-phospho-beta-D-ribosylamino)methylideneamino]imidazole-4-carboxamide. The protein operates within amino-acid biosynthesis; L-histidine biosynthesis; L-histidine from 5-phospho-alpha-D-ribose 1-diphosphate: step 3/9. Its function is as follows. Catalyzes the hydrolysis of the adenine ring of phosphoribosyl-AMP. The protein is Phosphoribosyl-AMP cyclohydrolase of Streptococcus thermophilus (strain ATCC BAA-491 / LMD-9).